The sequence spans 1400 residues: DNA-directed RNA polymerase subunit beta' (1400 aa).

Zn(2+) contacts are provided by C71, C73, C86, and C89. D462, D464, and D466 together coordinate Mg(2+). 4 residues coordinate Zn(2+): C811, C885, C892, and C895.

Belongs to the RNA polymerase beta' chain family. As to quaternary structure, the RNAP catalytic core consists of 2 alpha, 1 beta, 1 beta' and 1 omega subunit. When a sigma factor is associated with the core the holoenzyme is formed, which can initiate transcription. Mg(2+) serves as cofactor. Requires Zn(2+) as cofactor.

It carries out the reaction RNA(n) + a ribonucleoside 5'-triphosphate = RNA(n+1) + diphosphate. Functionally, DNA-dependent RNA polymerase catalyzes the transcription of DNA into RNA using the four ribonucleoside triphosphates as substrates. This Brucella ovis (strain ATCC 25840 / 63/290 / NCTC 10512) protein is DNA-directed RNA polymerase subunit beta'.